We begin with the raw amino-acid sequence, 20 residues long: Cytochrome P450 2A7 (20 aa).

This sequence belongs to the cytochrome P450 family. Heme serves as cofactor.

The protein localises to the endoplasmic reticulum membrane. It localises to the microsome membrane. It catalyses the reaction an organic molecule + reduced [NADPH--hemoprotein reductase] + O2 = an alcohol + oxidized [NADPH--hemoprotein reductase] + H2O + H(+). Functionally, exhibits a high coumarin 7-hydroxylase activity. The protein is Cytochrome P450 2A7 (CYP2A7) of Papio sp. (Baboon).